Reading from the N-terminus, the 150-residue chain is Large ribosomal subunit protein bL9 (150 aa).

The protein belongs to the bacterial ribosomal protein bL9 family.

In terms of biological role, binds to the 23S rRNA. In Shewanella frigidimarina (strain NCIMB 400), this protein is Large ribosomal subunit protein bL9.